A 352-amino-acid polypeptide reads, in one-letter code: Heat-inducible transcription repressor HrcA (352 aa).

The protein belongs to the HrcA family.

In terms of biological role, negative regulator of class I heat shock genes (grpE-dnaK-dnaJ and groELS operons). Prevents heat-shock induction of these operons. The chain is Heat-inducible transcription repressor HrcA from Thermosynechococcus vestitus (strain NIES-2133 / IAM M-273 / BP-1).